A 380-amino-acid polypeptide reads, in one-letter code: Probable protein phosphatase 2C 63 (380 aa).

The PPM-type phosphatase domain occupies 35 to 338 (DYSIAVVQAN…DDISVIVVYL (304 aa)). Asp-66, Gly-67, Asp-270, and Asp-329 together coordinate Mn(2+).

The protein belongs to the PP2C family. It depends on Mg(2+) as a cofactor. The cofactor is Mn(2+).

The enzyme catalyses O-phospho-L-seryl-[protein] + H2O = L-seryl-[protein] + phosphate. It catalyses the reaction O-phospho-L-threonyl-[protein] + H2O = L-threonyl-[protein] + phosphate. Functionally, may dephosphorylate and repress plasma membrane H(+)-ATPases (PM H(+)-ATPases, e.g. AHA1 and AHA2), thus influencing negatively plant growth and fitness. The chain is Probable protein phosphatase 2C 63 from Arabidopsis thaliana (Mouse-ear cress).